The chain runs to 460 residues: Squalene synthase (460 aa).

A helical transmembrane segment spans residues 425–445 (ISILFVFFIILVCLAVIFYVF).

It belongs to the phytoene/squalene synthase family. As to quaternary structure, interacts with pof14. Mg(2+) is required as a cofactor.

The protein resides in the endoplasmic reticulum membrane. It carries out the reaction 2 (2E,6E)-farnesyl diphosphate + NADPH + H(+) = squalene + 2 diphosphate + NADP(+). It catalyses the reaction 2 (2E,6E)-farnesyl diphosphate + NADH + H(+) = squalene + 2 diphosphate + NAD(+). It participates in terpene metabolism; lanosterol biosynthesis; lanosterol from farnesyl diphosphate: step 1/3. Its pathway is steroid metabolism; ergosterol biosynthesis. Its function is as follows. Squalene synthase; part of the third module of ergosterol biosynthesis pathway that includes by the late steps of the pathway. Erg9 produces squalene from 2 farnesyl pyrophosphate moieties. The third module or late pathway involves the ergosterol synthesis itself through consecutive reactions that mainly occur in the endoplasmic reticulum (ER) membrane. Firstly, the squalene synthase erg9 catalyzes the condensation of 2 farnesyl pyrophosphate moieties to form squalene, which is the precursor of all steroids. Secondly, squalene is converted into lanosterol by the consecutive action of the squalene epoxidase erg1 and the lanosterol synthase erg7. The lanosterol 14-alpha-demethylase erg11/cyp1 catalyzes C14-demethylation of lanosterol to produce 4,4'-dimethyl cholesta-8,14,24-triene-3-beta-ol. In the next steps, a complex process involving various demethylation, reduction and desaturation reactions catalyzed by the C-14 reductase erg24 and the C-4 demethylation complex erg25-erg26-erg27 leads to the production of zymosterol. Erg28 likely functions in the C-4 demethylation complex reaction by tethering erg26 and Erg27 to the endoplasmic reticulum or to facilitate interaction between these proteins. Then, the sterol 24-C-methyltransferase erg6 catalyzes the methyl transfer from S-adenosyl-methionine to the C-24 of zymosterol to form fecosterol. The C-8 sterol isomerase erg2 catalyzes the reaction which results in unsaturation at C-7 in the B ring of sterols and thus converts fecosterol to episterol. The sterol-C5-desaturases erg31 and erg32 then catalyze the introduction of a C-5 double bond in the B ring to produce 5-dehydroepisterol. The C-22 sterol desaturase erg5 further converts 5-dehydroepisterol into ergosta-5,7,22,24(28)-tetraen-3beta-ol by forming the C-22(23) double bond in the sterol side chain. Finally, ergosta-5,7,22,24(28)-tetraen-3beta-ol is substrate of the C-24(28) sterol reductase erg4 to produce ergosterol. In the genus Schizosaccharomyces, a second route exists between lanosterol and fecosterol, via the methylation of lanosterol to eburicol by erg6, followed by C14-demethylation by erg11/cyp1 and C4-demethylation by the demethylation complex erg25-erg26-erg27. The chain is Squalene synthase from Schizosaccharomyces pombe (strain 972 / ATCC 24843) (Fission yeast).